We begin with the raw amino-acid sequence, 189 residues long: dCTP deaminase (189 aa).

DCTP is bound by residues Lys-112 to Arg-117, Thr-136 to Glu-138, Gln-157, Tyr-171, and Gln-181. The active-site Proton donor/acceptor is Glu-138.

It belongs to the dCTP deaminase family. Homotrimer.

The enzyme catalyses dCTP + H2O + H(+) = dUTP + NH4(+). Its pathway is pyrimidine metabolism; dUMP biosynthesis; dUMP from dCTP (dUTP route): step 1/2. In terms of biological role, catalyzes the deamination of dCTP to dUTP. This is dCTP deaminase from Xanthomonas oryzae pv. oryzae (strain MAFF 311018).